A 313-amino-acid polypeptide reads, in one-letter code: Ribosomal RNA small subunit methyltransferase I (313 aa).

The interval 1–23 is disordered; that stretch reads MASIQLARTTRGGDGVARADGTR.

Belongs to the methyltransferase superfamily. RsmI family.

It is found in the cytoplasm. It carries out the reaction cytidine(1402) in 16S rRNA + S-adenosyl-L-methionine = 2'-O-methylcytidine(1402) in 16S rRNA + S-adenosyl-L-homocysteine + H(+). Catalyzes the 2'-O-methylation of the ribose of cytidine 1402 (C1402) in 16S rRNA. This is Ribosomal RNA small subunit methyltransferase I from Micromonospora olivasterospora.